A 98-amino-acid chain; its full sequence is NADH-ubiquinone oxidoreductase chain 4L (98 aa).

Helical transmembrane passes span 1-21 (MSLV…GLLM), 29-49 (ALLC…LTIL), and 61-81 (IILL…LVMV).

The protein belongs to the complex I subunit 4L family. Core subunit of respiratory chain NADH dehydrogenase (Complex I) which is composed of 45 different subunits.

It is found in the mitochondrion inner membrane. The enzyme catalyses a ubiquinone + NADH + 5 H(+)(in) = a ubiquinol + NAD(+) + 4 H(+)(out). Its function is as follows. Core subunit of the mitochondrial membrane respiratory chain NADH dehydrogenase (Complex I) which catalyzes electron transfer from NADH through the respiratory chain, using ubiquinone as an electron acceptor. Part of the enzyme membrane arm which is embedded in the lipid bilayer and involved in proton translocation. The sequence is that of NADH-ubiquinone oxidoreductase chain 4L (MT-ND4L) from Lagenorhynchus albirostris (White-beaked dolphin).